Consider the following 511-residue polypeptide: Tyrosine--tRNA ligase, chloroplastic/mitochondrial (511 aa).

Y118 provides a ligand contact to L-tyrosine. D122 provides a ligand contact to ATP. Positions P123 to N132 match the 'HIGH' region motif. Residues D162, Y256, Q260, D263, and Q282 each coordinate L-tyrosine. The 'KMSKS' region motif lies at K318–S322. ATP is bound at residue K321. The S4 RNA-binding domain occupies L444 to I510.

Belongs to the class-I aminoacyl-tRNA synthetase family.

It localises to the plastid. It is found in the chloroplast. The protein resides in the mitochondrion. It catalyses the reaction tRNA(Tyr) + L-tyrosine + ATP = L-tyrosyl-tRNA(Tyr) + AMP + diphosphate + H(+). Its function is as follows. Catalyzes the attachment of tyrosine to tRNA(Tyr) in a two-step reaction: tyrosine is first activated by ATP to form Tyr-AMP and then transferred to the acceptor end of tRNA(Tyr). The protein is Tyrosine--tRNA ligase, chloroplastic/mitochondrial of Arabidopsis thaliana (Mouse-ear cress).